We begin with the raw amino-acid sequence, 378 residues long: Galanin receptor 2b (378 aa).

At 1–30 the chain is on the extracellular side; the sequence is MSDHEDLNKAMGHWNASESYQLNPASVIVS. A helical membrane pass occupies residues 31-51; that stretch reads VVFSLIFLLGTIGNSLVLAVL. The Cytoplasmic segment spans residues 52–62; the sequence is LRSGQVGYNTT. A helical membrane pass occupies residues 63-83; that stretch reads NLFILNLSVADFFFIIFCVPF. Over 84-101 the chain is Extracellular; it reads QATIYSLEGWVFGSFMCK. An intrachain disulfide couples Cys100 to Cys177. A helical transmembrane segment spans residues 102 to 123; the sequence is VVHFFINLTMYASSFTLAAVSV. Topologically, residues 124-143 are cytoplasmic; the sequence is DRYLAIRYPLRSRELRTPCN. A helical membrane pass occupies residues 144 to 164; the sequence is AVVAMVVIWGLSLVFAGPYLS. The Extracellular segment spans residues 165 to 187; sequence YYDLIDFENSNVCVPGWEEHNRK. A helical membrane pass occupies residues 188–208; the sequence is VLDTCTFVFGYVIPVLIVSLS. Topologically, residues 209-238 are cytoplasmic; sequence YTRTIKYLWTAVDPLDGMSESKRAKRKVTK. Residues 239–259 form a helical membrane-spanning segment; that stretch reads MIIIVTVLFCICWLPYHVVIL. Residues 260 to 276 are Extracellular-facing; the sequence is CYLYGDFPFNQTTYAFR. Residues 277–297 traverse the membrane as a helical segment; the sequence is LLSHCMAYANSCLNPIVYALV. Residues 298–378 lie on the Cytoplasmic side of the membrane; the sequence is SKHFRKGFKK…TITLPFQNQP (81 aa). The tract at residues 339 to 362 is disordered; it reads EVSQMNEENARQNESEMVNRPLAQ.

It belongs to the G-protein coupled receptor 1 family. As to expression, expressed in neurons in the ventral area of the interpeduncular nucleus (IPN) where expression often overlaps with spx1.

The protein resides in the membrane. Receptor for the hormone galanin. Receptor for the hormones spexin-1 and spexin-2. This Danio rerio (Zebrafish) protein is Galanin receptor 2b.